The sequence spans 533 residues: Retinoid isomerohydrolase (533 aa).

A lipid anchor (S-palmitoyl cysteine; in membrane form) is attached at Cys-112. Phosphoserine is present on Ser-117. His-180 lines the Fe cation pocket. The S-palmitoyl cysteine; in membrane form moiety is linked to residue Cys-231. Residues His-241 and His-313 each coordinate Fe cation. A lipid anchor (S-palmitoyl cysteine; in membrane form) is attached at Cys-329. His-527 contacts Fe cation.

It belongs to the carotenoid oxygenase family. Requires Fe(2+) as cofactor. Palmitoylation by LRAT regulates ligand binding specificity; the palmitoylated form (membrane form) specifically binds all-trans-retinyl-palmitate, while the soluble unpalmitoylated form binds all-trans-retinol (vitamin A). As to expression, retinal pigment epithelium specific.

Its subcellular location is the cytoplasm. It localises to the cell membrane. The protein localises to the microsome membrane. It catalyses the reaction an all-trans-retinyl ester + H2O = 11-cis-retinol + a fatty acid + H(+). The catalysed reaction is lutein = (3R,3'S)-zeaxanthin. It carries out the reaction all-trans-retinyl hexadecanoate + H2O = 11-cis-retinol + hexadecanoate + H(+). Functionally, critical isomerohydrolase in the retinoid cycle involved in regeneration of 11-cis-retinal, the chromophore of rod and cone opsins. Catalyzes the cleavage and isomerization of all-trans-retinyl fatty acid esters to 11-cis-retinol which is further oxidized by 11-cis retinol dehydrogenase to 11-cis-retinal for use as visual chromophore. Essential for the production of 11-cis retinal for both rod and cone photoreceptors. Also capable of catalyzing the isomerization of lutein to meso-zeaxanthin an eye-specific carotenoid. The soluble form binds vitamin A (all-trans-retinol), making it available for LRAT processing to all-trans-retinyl ester. The membrane form, palmitoylated by LRAT, binds all-trans-retinyl esters, making them available for IMH (isomerohydrolase) processing to all-cis-retinol. The soluble form is regenerated by transferring its palmitoyl groups onto 11-cis-retinol, a reaction catalyzed by LRAT. In Gallus gallus (Chicken), this protein is Retinoid isomerohydrolase (RPE65).